A 204-amino-acid polypeptide reads, in one-letter code: Large ribosomal subunit protein uL4 (204 aa).

Residues 53 to 74 are disordered; it reads AYVSGGGKKPWRQKGRGGARAG.

It belongs to the universal ribosomal protein uL4 family. As to quaternary structure, part of the 50S ribosomal subunit.

Its function is as follows. One of the primary rRNA binding proteins, this protein initially binds near the 5'-end of the 23S rRNA. It is important during the early stages of 50S assembly. It makes multiple contacts with different domains of the 23S rRNA in the assembled 50S subunit and ribosome. In terms of biological role, forms part of the polypeptide exit tunnel. The sequence is that of Large ribosomal subunit protein uL4 from Campylobacter curvus (strain 525.92).